Consider the following 193-residue polypeptide: Flagellar transcriptional regulator FlhC (193 aa).

4 residues coordinate Zn(2+): Cys-137, Cys-140, Cys-158, and Cys-161.

This sequence belongs to the FlhC family. As to quaternary structure, heterohexamer composed of two FlhC and four FlhD subunits. Each FlhC binds a FlhD dimer, forming a heterotrimer, and a hexamer assembles by dimerization of two heterotrimers. It depends on Zn(2+) as a cofactor.

It is found in the cytoplasm. In terms of biological role, functions in complex with FlhD as a master transcriptional regulator that regulates transcription of several flagellar and non-flagellar operons by binding to their promoter region. Activates expression of class 2 flagellar genes, including fliA, which is a flagellum-specific sigma factor that turns on the class 3 genes. Also regulates genes whose products function in a variety of physiological pathways. The protein is Flagellar transcriptional regulator FlhC of Pectobacterium carotovorum (Erwinia carotovora).